The sequence spans 360 residues: Phenylalanine--tRNA ligase alpha subunit (360 aa).

Glu-260 provides a ligand contact to Mg(2+).

This sequence belongs to the class-II aminoacyl-tRNA synthetase family. Phe-tRNA synthetase alpha subunit type 1 subfamily. In terms of assembly, tetramer of two alpha and two beta subunits. The cofactor is Mg(2+).

The protein localises to the cytoplasm. The enzyme catalyses tRNA(Phe) + L-phenylalanine + ATP = L-phenylalanyl-tRNA(Phe) + AMP + diphosphate + H(+). The sequence is that of Phenylalanine--tRNA ligase alpha subunit from Beijerinckia indica subsp. indica (strain ATCC 9039 / DSM 1715 / NCIMB 8712).